The sequence spans 61 residues: Large ribosomal subunit protein eL37 (61 aa).

Residues C18, C21, C33, and C36 each contribute to the Zn(2+) site. Residues 18-36 (CRRCGRNAYNPTKKYCASC) form a C4-type zinc finger.

The protein belongs to the eukaryotic ribosomal protein eL37 family. The cofactor is Zn(2+).

Functionally, binds to the 23S rRNA. This Methanosphaera stadtmanae (strain ATCC 43021 / DSM 3091 / JCM 11832 / MCB-3) protein is Large ribosomal subunit protein eL37.